A 91-amino-acid polypeptide reads, in one-letter code: PqqA binding protein (91 aa).

It belongs to the PqqD family. Monomer. Interacts with PqqE.

It participates in cofactor biosynthesis; pyrroloquinoline quinone biosynthesis. In terms of biological role, functions as a PqqA binding protein and presents PqqA to PqqE, in the pyrroloquinoline quinone (PQQ) biosynthetic pathway. This chain is PqqA binding protein, found in Pseudomonas entomophila (strain L48).